An 853-amino-acid polypeptide reads, in one-letter code: G-type lectin S-receptor-like serine/threonine-protein kinase SRK (853 aa).

The first 31 residues, 1-31 (MRGELPNKHHSYTFFVFLFFFLILFPDLSIS), serve as a signal peptide directing secretion. Over 32 to 441 (VNTLSATESL…FGERRTIRGK (410 aa)) the chain is Extracellular. The region spanning 34 to 154 (TLSATESLTI…KINESDEFLW (121 aa)) is the Bulb-type lectin domain. Asparagine 46, asparagine 120, asparagine 147, and asparagine 243 each carry an N-linked (GlcNAc...) asparagine glycan. Residues 293–329 (PKDTCDLYGICGPYAYCDMSTSPTCNCIKGFQPLSPQ) form the EGF-like; atypical domain. 4 cysteine pairs are disulfide-bonded: cysteine 297-cysteine 309, cysteine 303-cysteine 317, cysteine 378-cysteine 403, and cysteine 382-cysteine 388. In terms of domain architecture, PAN spans 348 to 428 (CGEDRFFRLM…DGQDLFVRLA (81 aa)). Asparagine 387 carries N-linked (GlcNAc...) asparagine glycosylation. A helical membrane pass occupies residues 442–462 (IIGLIIGISLMLVLSFIIYCF). The Cytoplasmic portion of the chain corresponds to 463–853 (WKKKQKRARA…QITVSVINAR (391 aa)). The 279-residue stretch at 524–802 (FSDSNILGRG…PKMSSVVLML (279 aa)) folds into the Protein kinase domain. ATP contacts are provided by residues 530–538 (LGRGGFGIV) and lysine 552. Phosphoserine is present on serine 558. Residues 613–631 (TQSSNKLNWQTRFSIINGI) form a caM-binding region. Aspartate 650 serves as the catalytic Proton acceptor. A phosphoserine mark is found at serine 654 and serine 667. A Phosphothreonine modification is found at threonine 684. The segment at 807–838 (GEIPQPKRPGYCVGRSSLDTADSSSSTKRDSE) is disordered. Positions 822-832 (SSLDTADSSSS) are enriched in low complexity. Serine 831 bears the Phosphoserine mark.

This sequence belongs to the protein kinase superfamily. Ser/Thr protein kinase family.

It localises to the cell membrane. The catalysed reaction is L-seryl-[protein] + ATP = O-phospho-L-seryl-[protein] + ADP + H(+). The enzyme catalyses L-threonyl-[protein] + ATP = O-phospho-L-threonyl-[protein] + ADP + H(+). Female specificity determinant of self-incompatibility. This Arabidopsis thaliana (Mouse-ear cress) protein is G-type lectin S-receptor-like serine/threonine-protein kinase SRK (SRK).